The sequence spans 67 residues: Large ribosomal subunit protein uL29 (67 aa).

This sequence belongs to the universal ribosomal protein uL29 family.

This is Large ribosomal subunit protein uL29 from Ehrlichia ruminantium (strain Gardel).